A 702-amino-acid polypeptide reads, in one-letter code: Lipase maturation factor 2 (702 aa).

Transmembrane regions (helical) follow at residues 10-30 (LFLQ…YTQI), 75-95 (AQGL…ALLL), 102-122 (FIYL…QVFL), 123-143 (YFQW…VAPL), 164-184 (DLPF…SGVV), 226-246 (LSVV…FAPI), 259-279 (LLQI…LTLV), 316-336 (LMLE…YFGL), 363-383 (VTLP…LIAL), and 396-416 (FFAG…FLIS). Residue Asn488 is glycosylated (N-linked (GlcNAc...) asparagine). A helical transmembrane segment spans residues 628 to 648 (QLSPLEPSILLWGLLGAVVAI). The segment at 660-702 (LQSSKQTREEKRKQAPKKDSRAVSEQTAPNSNSNGSWAPRRKK) is disordered. Positions 665–681 (QTREEKRKQAPKKDSRA) are enriched in basic and acidic residues. Positions 682-695 (VSEQTAPNSNSNGS) are enriched in polar residues.

Belongs to the lipase maturation factor family.

It is found in the endoplasmic reticulum membrane. Functionally, involved in the maturation of specific proteins in the endoplasmic reticulum. May be required for maturation and transport of active lipoprotein lipase (LPL) through the secretory pathway. This Rattus norvegicus (Rat) protein is Lipase maturation factor 2 (Lmf2).